A 293-amino-acid polypeptide reads, in one-letter code: Transcription initiation factor IIB 2 (293 aa).

The TFIIB-type zinc-finger motif lies at 1–31 (MKCPYCKTDNAITYDVEKGMYVCTNCASVIE). Residues cysteine 3, cysteine 6, cysteine 23, and cysteine 26 each contribute to the Zn(2+) site. Repeat copies occupy residues 107–193 (SILN…ANSI) and 204–285 (EYIP…DIVD).

This sequence belongs to the TFIIB family.

Its function is as follows. Stabilizes TBP binding to an archaeal box-A promoter. Also responsible for recruiting RNA polymerase II to the pre-initiation complex (DNA-TBP-TFIIB). The protein is Transcription initiation factor IIB 2 of Saccharolobus solfataricus (strain ATCC 35092 / DSM 1617 / JCM 11322 / P2) (Sulfolobus solfataricus).